A 754-amino-acid chain; its full sequence is MENRDDEVEHQHSTMGSEGGTAGDGTPPPKRKGKFSTLGKIFKPWKWRKKKSSEKFKETSEVLERKMSMRRPRQELIEQGVLKELPDNESGEAHGHKAPYVKNGHTLPVGVGGSLALEQVHSPSESEFRINPVWLPQPEDRRARAPSDGDHRGALGPRASNQDDGRRGGWSVGTEDWKNNLAWHGEDIRRGGRAHAEMDKRPGLMKAPSEDGRRTRPEPDWKPTLPRHSSVEEGRGRRESDSSQYLPNSEMMRDTLREPLPPKQSIMPPKWLMTSTPEPGSDSLPRTPVHNPAAPSFCSSNSSSSSSAGKPLRNVSSAGANTAPPGGAPLTTSSAPCSMGTIPNHPSKQPPMPPPKPINRSNNPAIMAELTQGGMNLVPAKPSPPMPPKRTTPVTKRNPEDSPLTIASLPSILSEDMRANIPGGYQLPPPPPSPPLPTHIPPSPPRAHTHHLLHQHSYPYPLPQPLPVHFDPPSPPEDPPARDEDDYSDEEEEEEDDEDDEEPPPDHLPSPQSQPELEPRSRRCLVGELSVSVIPEGNNSSEEEEDEEDQHPEESDSDGPVLYKDDESDEDEEDDSPPSALASRVKRKDTLALKLSSRPSAPDRQAPERQAKSEHSGLSWQSKEQWEAIRTQIGTALTRRLSQRPTAEELEQRNILQPKNEADRQAEVREIKRRLTRKLSQRPTVAELQARKILRFHEYVEVTSAQDYDRRADKPWTKLTPADKAAIRKELNEFKSSEMEVHEESRIYTRFHRP.

Over residues 1–12 the composition is skewed to basic and acidic residues; that stretch reads MENRDDEVEHQH. Disordered regions lie at residues 1-38, 83-105, 120-625, and 637-666; these read MENR…FSTL, KELP…KNGH, VHSP…SKEQ, and LTRR…DRQA. One copy of the RPEL 1 repeat lies at 61–86; that stretch reads EVLERKMSMRRPRQELIEQGVLKELP. Basic and acidic residues-rich tracts occupy residues 138–153, 184–221, and 229–241; these read PEDR…DHRG, HGED…EPDW, and SSVE…RESD. Low complexity-rich tracts occupy residues 296-307 and 316-333; these read SFCSSNSSSSSS and SSAG…LTTS. Pro residues-rich tracts occupy residues 348–357, 381–390, 427–445, and 460–478; these read KQPPMPPPKP, KPSPPMPPKR, LPPP…PSPP, and YPLP…PPED. 3 stretches are compositionally biased toward acidic residues: residues 483–503, 541–557, and 566–576; these read DEDD…DEEP, SEEE…ESDS, and DESDEDEEDDS. The segment covering 605 to 615 has biased composition (basic and acidic residues); it reads QAPERQAKSEH. RPEL repeat units lie at residues 635–660 and 673–698; these read TALT…QPKN and RRLT…RFHE. Ser642 carries the phosphoserine modification.

This sequence belongs to the phosphatase and actin regulator family. Binds ppp1ca and actin.

Its subcellular location is the cytoplasm. It is found in the cell projection. It localises to the lamellipodium. In terms of biological role, regulator of protein phosphatase 1 (PP1) required for neural tube and optic fissure closure, and enteric neural crest cell (ENCCs) migration during development. Acts as an activator of PP1. During neural tube closure, localizes to the ventral neural tube and activates PP1, leading to down-regulate cell proliferation within cranial neural tissue and the neural retina. Also acts as a regulator of migration of enteric neural crest cells (ENCCs) by activating PP1, leading to repression of the integrin signaling through the rho/rock pathway. The polypeptide is Phosphatase and actin regulator 4B (phactr4b) (Danio rerio (Zebrafish)).